The chain runs to 435 residues: 5-methylthioadenosine/S-adenosylhomocysteine deaminase (435 aa).

2 residues coordinate Zn(2+): His65 and His67. Substrate-binding residues include Glu94, Arg150, and His189. His216 is a binding site for Zn(2+). Substrate is bound by residues Glu219 and Asp304. Asp304 contributes to the Zn(2+) binding site.

The protein belongs to the metallo-dependent hydrolases superfamily. MTA/SAH deaminase family. It depends on Zn(2+) as a cofactor.

It carries out the reaction S-adenosyl-L-homocysteine + H2O + H(+) = S-inosyl-L-homocysteine + NH4(+). It catalyses the reaction S-methyl-5'-thioadenosine + H2O + H(+) = S-methyl-5'-thioinosine + NH4(+). Its function is as follows. Catalyzes the deamination of 5-methylthioadenosine and S-adenosyl-L-homocysteine into 5-methylthioinosine and S-inosyl-L-homocysteine, respectively. Is also able to deaminate adenosine. This is 5-methylthioadenosine/S-adenosylhomocysteine deaminase from Bacillus cereus (strain ZK / E33L).